The chain runs to 354 residues: Uroporphyrinogen decarboxylase (354 aa).

Substrate is bound by residues 27–31 (RQAGR), D77, Y154, S209, and H327.

The protein belongs to the uroporphyrinogen decarboxylase family. Homodimer.

Its subcellular location is the cytoplasm. The catalysed reaction is uroporphyrinogen III + 4 H(+) = coproporphyrinogen III + 4 CO2. Its pathway is porphyrin-containing compound metabolism; protoporphyrin-IX biosynthesis; coproporphyrinogen-III from 5-aminolevulinate: step 4/4. Its function is as follows. Catalyzes the decarboxylation of four acetate groups of uroporphyrinogen-III to yield coproporphyrinogen-III. The chain is Uroporphyrinogen decarboxylase from Shewanella baltica (strain OS185).